The chain runs to 171 residues: Putative lipoprotein LppO (171 aa).

An N-terminal signal peptide occupies residues 1-28 (MTDPRHTVRIAVGATALGVSALGATLPA). Residue cysteine 29 is the site of N-palmitoyl cysteine attachment. A lipid anchor (S-diacylglycerol cysteine) is attached at cysteine 29.

The protein resides in the cell membrane. The protein is Putative lipoprotein LppO (lppO) of Mycobacterium tuberculosis (strain CDC 1551 / Oshkosh).